We begin with the raw amino-acid sequence, 422 residues long: Synaptotagmin-2 (422 aa).

The segment at 1–43 (MRNIFKRNQEPNVAPATTTATMPLAPVAPADNSTESTGPGESQ) is disordered. Over 1-60 (MRNIFKRNQEPNVAPATTTATMPLAPVAPADNSTESTGPGESQEDMFAKLKEKFFNEINK) the chain is Vesicular. The span at 14 to 30 (APATTTATMPLAPVAPA) shows a compositional bias: low complexity. Residues 31 to 40 (DNSTESTGPG) show a composition bias toward polar residues. Asparagine 32 carries an N-linked (GlcNAc...) asparagine glycan. Residues 61 to 87 (IPLPPWALIAMAVVAGLLLLTCCFCIC) traverse the membrane as a helical segment. Residues 88–422 (KKCCCKKKKN…EVDALLGKNK (335 aa)) are Cytoplasmic-facing. The disordered stretch occupies residues 102 to 141 (GKGMKNAMNMKDMKGGQDDDDAETGLTEGEGEGEEEKEPE). Over residues 119–139 (DDDDAETGLTEGEGEGEEEKE) the composition is skewed to acidic residues. 2 positions are modified to phosphothreonine: threonine 125 and threonine 128. The interval 136-382 (EEKEPENLGK…AIGKIFVGSN (247 aa)) is phospholipid binding. C2 domains are found at residues 142–261 (NLGK…EEWR) and 273–406 (KLGD…AQWH). The Ca(2+) site is built by leucine 172, aspartate 173, and aspartate 179. Threonine 202 is subject to Phosphothreonine. Tyrosine 230 bears the Phosphotyrosine mark. Positions 231, 232, 233, 236, 237, 239, 304, 310, 364, and 366 each coordinate Ca(2+). A Phosphothreonine modification is found at threonine 386.

This sequence belongs to the synaptotagmin family. Homotetramer. Heterodimer; heterodimerizes with SYT1 in presence of calcium. Interacts with SCAMP5. Interacts with STON2. Interacts with PRRT2. In terms of assembly, (Microbial infection) Interacts with C.botulinum neurotoxin type B (BoNT/B, botB). As to quaternary structure, (Microbial infection) Interacts with C.botulinum neurotoxin type G (BoNT/G, botG). Requires Ca(2+) as cofactor. In terms of processing, phosphorylation at Thr-202 by WNK1, changes the calcium requirement for SYT2-binding to phospholipid membranes.

Its subcellular location is the cytoplasmic vesicle. The protein localises to the secretory vesicle. It is found in the synaptic vesicle membrane. The protein resides in the chromaffin granule membrane. It localises to the cytoplasm. In terms of biological role, exhibits calcium-dependent phospholipid and inositol polyphosphate binding properties. May have a regulatory role in the membrane interactions during trafficking of synaptic vesicles at the active zone of the synapse. Plays a role in dendrite formation by melanocytes. Its function is as follows. (Microbial infection) Receptor for C.botulinum neurotoxin type B (BoNT/B, botB); interaction is improved in the presence of gangliosides. The toxin binds via the vesicular domain (residues 47-60). Functionally, (Microbial infection) Receptor for C.botulinum neurotoxin type G (BoNT/G, botG); gangliosides are not required for (or only very slightly improve) binding to a membrane-anchored receptor fragment. The toxin binds via the vesicular domain (residues 47-55). This is Synaptotagmin-2 from Mus musculus (Mouse).